The following is a 75-amino-acid chain: Small ribosomal subunit protein bS18 (75 aa).

The protein belongs to the bacterial ribosomal protein bS18 family. Part of the 30S ribosomal subunit. Forms a tight heterodimer with protein bS6.

Binds as a heterodimer with protein bS6 to the central domain of the 16S rRNA, where it helps stabilize the platform of the 30S subunit. The protein is Small ribosomal subunit protein bS18 of Mycoplasma mycoides subsp. mycoides SC (strain CCUG 32753 / NCTC 10114 / PG1).